The chain runs to 409 residues: NADH-quinone oxidoreductase subunit D (409 aa).

This sequence belongs to the complex I 49 kDa subunit family. As to quaternary structure, NDH-1 is composed of 14 different subunits. Subunits NuoB, C, D, E, F, and G constitute the peripheral sector of the complex.

The protein localises to the cell inner membrane. The catalysed reaction is a quinone + NADH + 5 H(+)(in) = a quinol + NAD(+) + 4 H(+)(out). In terms of biological role, NDH-1 shuttles electrons from NADH, via FMN and iron-sulfur (Fe-S) centers, to quinones in the respiratory chain. The immediate electron acceptor for the enzyme in this species is believed to be ubiquinone. Couples the redox reaction to proton translocation (for every two electrons transferred, four hydrogen ions are translocated across the cytoplasmic membrane), and thus conserves the redox energy in a proton gradient. This Helicobacter pylori (strain P12) protein is NADH-quinone oxidoreductase subunit D.